The primary structure comprises 85 residues: Small ribosomal subunit protein bS18 (85 aa).

This sequence belongs to the bacterial ribosomal protein bS18 family. Part of the 30S ribosomal subunit. Forms a tight heterodimer with protein bS6.

Functionally, binds as a heterodimer with protein bS6 to the central domain of the 16S rRNA, where it helps stabilize the platform of the 30S subunit. The sequence is that of Small ribosomal subunit protein bS18 from Helicobacter pylori (strain P12).